The sequence spans 649 residues: Acetyl-coenzyme A synthetase (649 aa).

Residues 189 to 192 (RGGK), T311, and N335 each bind CoA. Residues 387 to 389 (GEP), 411 to 416 (DTWWQT), D500, and R515 contribute to the ATP site. S523 lines the CoA pocket. R526 contacts ATP. The Mg(2+) site is built by V537, H539, and V542. R584 provides a ligand contact to CoA. K609 carries the N6-acetyllysine modification.

The protein belongs to the ATP-dependent AMP-binding enzyme family. Mg(2+) serves as cofactor. Acetylated. Deacetylation by the SIR2-homolog deacetylase activates the enzyme.

It carries out the reaction acetate + ATP + CoA = acetyl-CoA + AMP + diphosphate. In terms of biological role, catalyzes the conversion of acetate into acetyl-CoA (AcCoA), an essential intermediate at the junction of anabolic and catabolic pathways. AcsA undergoes a two-step reaction. In the first half reaction, AcsA combines acetate with ATP to form acetyl-adenylate (AcAMP) intermediate. In the second half reaction, it can then transfer the acetyl group from AcAMP to the sulfhydryl group of CoA, forming the product AcCoA. This Rhizobium meliloti (strain 1021) (Ensifer meliloti) protein is Acetyl-coenzyme A synthetase.